A 320-amino-acid polypeptide reads, in one-letter code: Polyprenal reductase 1 (320 aa).

Transmembrane regions (helical) follow at residues I5–V25, F64–W84, M143–C163, P200–I220, I243–V263, and L266–V286.

The protein belongs to the steroid 5-alpha reductase family. Polyprenal reductase subfamily. Expressed in roots and flowers.

The protein localises to the cell membrane. The enzyme catalyses a di-trans,poly-cis-dolichal + NADP(+) = a di-trans,poly-cis-polyprenal + NADPH + H(+). The protein operates within protein modification; protein glycosylation. Its function is as follows. Plays a key role in early steps of protein N-linked glycosylation by being involved in the conversion of polyprenol into dolichol. Acts as a polyprenal reductase that mediates the reduction of polyprenal into dolichal in a NADP-dependent mechanism. Dolichols are required for the synthesis of dolichol-linked monosaccharides and the oligosaccharide precursor used for N-glycosylation. Involved in the regulation of plant growth and reproductive processes. This is Polyprenal reductase 1 from Arabidopsis thaliana (Mouse-ear cress).